The chain runs to 448 residues: Tryptophan dimethylallyltransferase 1 (448 aa).

L-tryptophan is bound by residues 80-81 (IL) and Glu89. Substrate contacts are provided by Arg100, Lys186, and Tyr188. Residues Tyr190 and Arg249 each coordinate L-tryptophan. Residues Arg262, Lys264, Tyr266, Gln348, Tyr350, Tyr414, and Tyr418 each coordinate substrate.

The protein belongs to the tryptophan dimethylallyltransferase family. In terms of assembly, homodimer.

It catalyses the reaction L-tryptophan + dimethylallyl diphosphate = 4-(3-methylbut-2-enyl)-L-tryptophan + diphosphate. It functions in the pathway alkaloid biosynthesis; ergot alkaloid biosynthesis. Tryptophan dimethylallyltransferase; part of the gene cluster that mediates the biosynthesis of fungal ergot alkaloid. DmaW catalyzes the first step of ergot alkaloid biosynthesis by condensing dimethylallyl diphosphate (DMAP) and tryptophan to form 4-dimethylallyl-L-tryptophan. The second step is catalyzed by the methyltransferase easF that methylates 4-dimethylallyl-L-tryptophan in the presence of S-adenosyl-L-methionine, resulting in the formation of 4-dimethylallyl-L-abrine. The catalase easC and the FAD-dependent oxidoreductase easE then transform 4-dimethylallyl-L-abrine to chanoclavine-I which is further oxidized by easD in the presence of NAD(+), resulting in the formation of chanoclavine-I aldehyde. Agroclavine dehydrogenase easG then mediates the conversion of chanoclavine-I aldehyde to agroclavine via a non-enzymatic adduct reaction: the substrate is an iminium intermediate that is formed spontaneously from chanoclavine-I aldehyde in the presence of glutathione. The presence of easA is not required to complete this reaction. Further conversion of agroclavine to paspalic acid is a two-step process involving oxidation of agroclavine to elymoclavine and of elymoclavine to paspalic acid, the second step being performed by the elymoclavine oxidase cloA. Paspalic acid is then further converted to D-lysergic acid. Ergopeptines are assembled from D-lysergic acid and three different amino acids by the D-lysergyl-peptide-synthetases composed each of a monomudular and a trimodular nonribosomal peptide synthetase subunit. LpsB and lpsC encode the monomodular subunits responsible for D-lysergic acid activation and incorporation into the ergopeptine backbone. LpsA1 and A2 subunits encode the trimodular nonribosomal peptide synthetase assembling the tripeptide portion of ergopeptines. LpsA1 is responsible for formation of the major ergopeptine, ergotamine, and lpsA2 for alpha-ergocryptine, the minor ergopeptine of the total alkaloid mixture elaborated by C.purpurea. D-lysergyl-tripeptides are assembled by the nonribosomal peptide synthetases and released as N-(D-lysergyl-aminoacyl)-lactams. Cyclolization of the D-lysergyl-tripeptides is performed by the Fe(2+)/2-ketoglutarate-dependent dioxygenase easH which introduces a hydroxyl group into N-(D-lysergyl-aminoacyl)-lactam at alpha-C of the aminoacyl residue followed by spontaneous condensation with the terminal lactam carbonyl group. The polypeptide is Tryptophan dimethylallyltransferase 1 (Claviceps purpurea (Ergot fungus)).